The following is a 387-amino-acid chain: Alkanesulfonate monooxygenase (387 aa).

This sequence belongs to the SsuD family.

It catalyses the reaction an alkanesulfonate + FMNH2 + O2 = an aldehyde + FMN + sulfite + H2O + 2 H(+). In terms of biological role, catalyzes the desulfonation of aliphatic sulfonates. In Cupriavidus metallidurans (strain ATCC 43123 / DSM 2839 / NBRC 102507 / CH34) (Ralstonia metallidurans), this protein is Alkanesulfonate monooxygenase.